Here is a 103-residue protein sequence, read N- to C-terminus: Small ribosomal subunit protein uS10 (103 aa).

The protein belongs to the universal ribosomal protein uS10 family. As to quaternary structure, part of the 30S ribosomal subunit.

Functionally, involved in the binding of tRNA to the ribosomes. This Fusobacterium nucleatum subsp. nucleatum (strain ATCC 25586 / DSM 15643 / BCRC 10681 / CIP 101130 / JCM 8532 / KCTC 2640 / LMG 13131 / VPI 4355) protein is Small ribosomal subunit protein uS10.